The chain runs to 376 residues: N-acetyldiaminopimelate deacetylase (376 aa).

Asp-69 is an active-site residue. The active-site Proton acceptor is the Glu-128.

It belongs to the peptidase M20A family. N-acetyldiaminopimelate deacetylase subfamily.

The catalysed reaction is N-acetyl-(2S,6S)-2,6-diaminopimelate + H2O = (2S,6S)-2,6-diaminopimelate + acetate. It functions in the pathway amino-acid biosynthesis; L-lysine biosynthesis via DAP pathway; LL-2,6-diaminopimelate from (S)-tetrahydrodipicolinate (acetylase route): step 3/3. Catalyzes the conversion of N-acetyl-diaminopimelate to diaminopimelate and acetate. The sequence is that of N-acetyldiaminopimelate deacetylase from Streptococcus pneumoniae (strain JJA).